A 1034-amino-acid polypeptide reads, in one-letter code: Condensin complex subunit 3 (1034 aa).

HEAT repeat units follow at residues 95-132, 139-176, 178-213, 242-279, 281-317, 439-476, and 618-655; these read SPVNCLFNFLLQSHGASSMAVRFRVCQLINKLLVNLPE, DLFDKIHDAMLIRLKDRVPNVRIQAVLALARLQDPSDP, CPVSNAYVHLLENDSNPEVRRAVLTCIAPSAKSLPK, LTIAQRVKLLQQGLNDRSAAVKDVIQKKLIQAWLQYSE, DVLDLLHRLDVENSPEVSLSALNALFSVSPVGELVQN, TSLISSLAELLLFVLKDDDKRIQTVAEIISELREPIVT, and DFARQHLPLLLQILQLDEVKVKNSALNAVFDMLLLFGM. Residues 663-672 are compositionally biased toward polar residues; it reads TNPDDSQCKA. The disordered stretch occupies residues 663-693; it reads TNPDDSQCKAQENADEDISEQEKPGSVDENL. HEAT repeat units lie at residues 703-740, 785-823, and 878-915; these read ATVNGILHLFSGFLDSEIAEIRTETAEGLVKLMFSGRL, CFAEAFLPTLQTLFNAPASSPLADVDVANVAELLVDLTR, and ENSTDLLPLLDCAVEDVTDKVCERAIEKVRSQLRSGRE. Basic and acidic residues predominate over residues 909–949; sequence QLRSGREEHRVSKETEPQVSKETEDRTNLQENEEGKQKDEA. Positions 909–1034 are disordered; sequence QLRSGREEHR…LSKLLNEEAN (126 aa). Residues 964–984 are compositionally biased toward basic residues; the sequence is RGKATKGRRKGPAAAATRRKA. Basic and acidic residues predominate over residues 985–999; the sequence is SKAEEAEAEMERQEE.

It belongs to the CND3 (condensin subunit 3) family. Component of the condensin complex, which contains the XCAP-E/SMC2 and XCAP-C/SMC4 heterodimer, and three non SMC subunits that probably regulate the complex: XCAP-H/NCAPH, XCAP-D2/NCAPD2 and XCAP-G/NCAPG. Post-translationally, phosphorylated by cdk1. Its phosphorylation, as well as that of XCAP-D2 and XCAP-H subunits, activates the condensin complex and is required for chromosome condensation.

The protein resides in the nucleus. It is found in the cytoplasm. Its subcellular location is the chromosome. Functionally, regulatory subunit of the condensin complex, a complex required for conversion of interphase chromatin into mitotic-like condense chromosomes. The condensin complex probably introduces positive supercoils into relaxed DNA in the presence of type I topoisomerases and converts nicked DNA into positive knotted forms in the presence of type II topoisomerase. This Xenopus laevis (African clawed frog) protein is Condensin complex subunit 3 (ncapg).